The chain runs to 39 residues: Cytochrome b6-f complex subunit 5 (39 aa).

Residues 5-25 (LLCGIVLGLVPITLLGLFVSA) form a helical membrane-spanning segment.

It belongs to the PetG family. As to quaternary structure, the 4 large subunits of the cytochrome b6-f complex are cytochrome b6, subunit IV (17 kDa polypeptide, PetD), cytochrome f and the Rieske protein, while the 4 small subunits are PetG, PetL, PetM and PetN. The complex functions as a dimer.

It is found in the cellular thylakoid membrane. Functionally, component of the cytochrome b6-f complex, which mediates electron transfer between photosystem II (PSII) and photosystem I (PSI), cyclic electron flow around PSI, and state transitions. PetG is required for either the stability or assembly of the cytochrome b6-f complex. This chain is Cytochrome b6-f complex subunit 5, found in Prochlorococcus marinus (strain MIT 9515).